A 384-amino-acid chain; its full sequence is ATP phosphoribosyltransferase regulatory subunit (384 aa).

This sequence belongs to the class-II aminoacyl-tRNA synthetase family. HisZ subfamily. In terms of assembly, heteromultimer composed of HisG and HisZ subunits.

It is found in the cytoplasm. Its pathway is amino-acid biosynthesis; L-histidine biosynthesis; L-histidine from 5-phospho-alpha-D-ribose 1-diphosphate: step 1/9. Required for the first step of histidine biosynthesis. May allow the feedback regulation of ATP phosphoribosyltransferase activity by histidine. This Azoarcus sp. (strain BH72) protein is ATP phosphoribosyltransferase regulatory subunit.